Reading from the N-terminus, the 892-residue chain is Translation initiation factor IF-2 (892 aa).

Residues 165-175 (EEQAELERQKT) are compositionally biased toward basic and acidic residues. 2 disordered regions span residues 165–250 (EEQA…EDDS) and 264–300 (ERAR…AHGF). Low complexity predominate over residues 208–222 (PRAVRPAPAARPSVS). One can recognise a tr-type G domain in the interval 391-560 (PRPPVVTIMG…SIQAEVLELK (170 aa)). GTP-binding positions include 400-407 (GHVDHGKT), 446-450 (DTPGH), and 500-503 (SKID).

It belongs to the TRAFAC class translation factor GTPase superfamily. Classic translation factor GTPase family. IF-2 subfamily.

The protein localises to the cytoplasm. One of the essential components for the initiation of protein synthesis. Protects formylmethionyl-tRNA from spontaneous hydrolysis and promotes its binding to the 30S ribosomal subunits. Also involved in the hydrolysis of GTP during the formation of the 70S ribosomal complex. The protein is Translation initiation factor IF-2 of Xylella fastidiosa (strain 9a5c).